A 423-amino-acid chain; its full sequence is Glucose-1-phosphate adenylyltransferase (423 aa).

Alpha-D-glucose 1-phosphate contacts are provided by residues Y110, G175, 190 to 191, and S208; that span reads EK.

This sequence belongs to the bacterial/plant glucose-1-phosphate adenylyltransferase family. As to quaternary structure, homotetramer.

The enzyme catalyses alpha-D-glucose 1-phosphate + ATP + H(+) = ADP-alpha-D-glucose + diphosphate. The protein operates within glycan biosynthesis; glycogen biosynthesis. Functionally, involved in the biosynthesis of ADP-glucose, a building block required for the elongation reactions to produce glycogen. Catalyzes the reaction between ATP and alpha-D-glucose 1-phosphate (G1P) to produce pyrophosphate and ADP-Glc. The polypeptide is Glucose-1-phosphate adenylyltransferase (Nitrosococcus oceani (strain ATCC 19707 / BCRC 17464 / JCM 30415 / NCIMB 11848 / C-107)).